A 291-amino-acid polypeptide reads, in one-letter code: uncharacterized protein (291 aa).

In terms of domain architecture, HTH araC/xylS-type spans 191 to 289 (KQMLNWIHLH…NMTPLSYKKM (99 aa)). 2 DNA-binding regions (H-T-H motif) span residues 208-229 (EDIAKAGQLSRSECCRYFKRML) and 256-279 (VTEVSYQVGFNSTSYFISKFQQAM).

This is an uncharacterized protein from Bacillus subtilis (strain 168).